The following is a 423-amino-acid chain: Gamma-glutamyl phosphate reductase (423 aa).

Belongs to the gamma-glutamyl phosphate reductase family.

The protein localises to the cytoplasm. It catalyses the reaction L-glutamate 5-semialdehyde + phosphate + NADP(+) = L-glutamyl 5-phosphate + NADPH + H(+). It participates in amino-acid biosynthesis; L-proline biosynthesis; L-glutamate 5-semialdehyde from L-glutamate: step 2/2. Functionally, catalyzes the NADPH-dependent reduction of L-glutamate 5-phosphate into L-glutamate 5-semialdehyde and phosphate. The product spontaneously undergoes cyclization to form 1-pyrroline-5-carboxylate. This chain is Gamma-glutamyl phosphate reductase, found in Magnetococcus marinus (strain ATCC BAA-1437 / JCM 17883 / MC-1).